A 103-amino-acid polypeptide reads, in one-letter code: Putative RNA-binding protein RbpB (103 aa).

The RRM domain maps to 2 to 79; it reads SIYVGNLSYD…RDLKVNKAKP (78 aa). Positions 74–85 are enriched in basic and acidic residues; the sequence is VNKAKPREDRGG. Residues 74–103 are disordered; that stretch reads VNKAKPREDRGGSRGSFGGNRSNNNFRNRY. The span at 92-103 shows a compositional bias: low complexity; the sequence is GNRSNNNFRNRY.

This is Putative RNA-binding protein RbpB (rbpB) from Nostoc sp. (strain PCC 7120 / SAG 25.82 / UTEX 2576).